Reading from the N-terminus, the 201-residue chain is MGDRICGPEIERLIQLLARLPGLGPRSARRAALHLIRKREELFGPLAEAMRVARDTIVSCSVCGNVDSCDPCTICRDERRDPSTLIVVETVGDLWALERSGAVKGRYHVLGGVLSPLDGVGPKDLNISSLIERVAAGGISEVVLAVNATVDGQTTAHYVTDLISHLNVRTTRLAHGVPVGGELDYLDEGTLAAALRARTDF.

The C4-type zinc-finger motif lies at 60-75 (CSVCGNVDSCDPCTIC). The Toprim domain occupies 83 to 178 (STLIVVETVG…RTTRLAHGVP (96 aa)).

It belongs to the RecR family.

In terms of biological role, may play a role in DNA repair. It seems to be involved in an RecBC-independent recombinational process of DNA repair. It may act with RecF and RecO. The polypeptide is Recombination protein RecR (Methylocella silvestris (strain DSM 15510 / CIP 108128 / LMG 27833 / NCIMB 13906 / BL2)).